We begin with the raw amino-acid sequence, 525 residues long: BTB/POZ domain-containing protein 2 (525 aa).

Positions 1–86 (MAAGGSGGRA…AEEAAGPGAA (86 aa)) are disordered. Residues 16–26 (VGVGPGTGGSP) show a composition bias toward gly residues. Positions 27–55 (GPSANAAATPAPGNAAAAAAAAAAAAAAP) are enriched in low complexity. Over residues 56–65 (GPTPPAPPGP) the composition is skewed to pro residues. Positions 66 to 86 (GTDAQAAGAERAEEAAGPGAA) are enriched in low complexity. The 71-residue stretch at 117-187 (CDVHFLVGKG…LYSDEVQIGP (71 aa)) folds into the BTB domain.

In terms of assembly, interacts with topoisomerase 1 and with TRIM5 isoform Delta.

Its subcellular location is the cytoplasm. The sequence is that of BTB/POZ domain-containing protein 2 (BTBD2) from Homo sapiens (Human).